The primary structure comprises 328 residues: Ornithine transcarbamylase, mitochondrial (328 aa).

The transit peptide at 1–6 (GGQPLQ) directs the protein to the mitochondrion. An N6-acetyllysine; alternate modification is found at K44. The residue at position 44 (K44) is an N6-succinyllysine; alternate. K54 carries the post-translational modification N6-succinyllysine. Position 62 is an N6-acetyllysine; alternate (K62). K62 bears the N6-succinyllysine; alternate mark. A carbamoyl phosphate-binding site is contributed by 64-68 (STRTR). S107 is subject to Phosphoserine. A carbamoyl phosphate-binding site is contributed by R115. R115 is a binding site for L-ornithine. K118 carries the N6-acetyllysine; alternate modification. At K118 the chain carries N6-succinyllysine; alternate. A carbamoyl phosphate-binding site is contributed by H142. Residue N173 participates in L-ornithine binding. Residues K195, K205, and K212 each carry the N6-acetyllysine; alternate modification. N6-succinyllysine; alternate is present on residues K195, K205, and K212. 237–241 (DTWIS) contacts L-ornithine. K248 and K263 each carry N6-succinyllysine. 276-279 (HCLP) provides a ligand contact to L-ornithine. Residue C277 is part of the active site. At K281 the chain carries N6-acetyllysine; alternate. K281 carries the post-translational modification N6-succinyllysine; alternate. Residue R304 coordinates carbamoyl phosphate. Residue R304 participates in L-ornithine binding.

It belongs to the aspartate/ornithine carbamoyltransferase superfamily. OTCase family. Homotrimer. Post-translationally, acetylation at Lys-62 negatively regulates ornithine carbamoyltransferase activity in response to nutrient signals.

It localises to the mitochondrion matrix. The catalysed reaction is carbamoyl phosphate + L-ornithine = L-citrulline + phosphate + H(+). The protein operates within nitrogen metabolism; urea cycle; L-citrulline from L-ornithine and carbamoyl phosphate: step 1/1. Its activity is regulated as follows. Negatively regulated by lysine acetylation. In terms of biological role, catalyzes the second step of the urea cycle, the condensation of carbamoyl phosphate with L-ornithine to form L-citrulline. The urea cycle ensures the detoxification of ammonia by converting it to urea for excretion. This Sus scrofa (Pig) protein is Ornithine transcarbamylase, mitochondrial.